The primary structure comprises 410 residues: Phosphoglycerate kinase (410 aa).

Substrate contacts are provided by residues 24 to 26 (DLN), R40, 63 to 66 (HLGR), R122, and R162. ATP-binding positions include K212, G300, E331, and 360–363 (GGDS).

The protein belongs to the phosphoglycerate kinase family. As to quaternary structure, monomer.

It is found in the cytoplasm. It catalyses the reaction (2R)-3-phosphoglycerate + ATP = (2R)-3-phospho-glyceroyl phosphate + ADP. It participates in carbohydrate degradation; glycolysis; pyruvate from D-glyceraldehyde 3-phosphate: step 2/5. This Nocardia farcinica (strain IFM 10152) protein is Phosphoglycerate kinase.